Consider the following 1375-residue polypeptide: DNA-directed RNA polymerase subunit beta (1375 aa).

This sequence belongs to the RNA polymerase beta chain family. In terms of assembly, the RNAP catalytic core consists of 2 alpha, 1 beta, 1 beta' and 1 omega subunit. When a sigma factor is associated with the core the holoenzyme is formed, which can initiate transcription.

The enzyme catalyses RNA(n) + a ribonucleoside 5'-triphosphate = RNA(n+1) + diphosphate. Its function is as follows. DNA-dependent RNA polymerase catalyzes the transcription of DNA into RNA using the four ribonucleoside triphosphates as substrates. The sequence is that of DNA-directed RNA polymerase subunit beta from Coxiella burnetii (strain RSA 331 / Henzerling II).